The primary structure comprises 253 residues: 5-oxoprolinase subunit A (253 aa).

The protein belongs to the LamB/PxpA family. In terms of assembly, forms a complex composed of PxpA, PxpB and PxpC.

The enzyme catalyses 5-oxo-L-proline + ATP + 2 H2O = L-glutamate + ADP + phosphate + H(+). Catalyzes the cleavage of 5-oxoproline to form L-glutamate coupled to the hydrolysis of ATP to ADP and inorganic phosphate. In Bacillus cereus (strain AH187), this protein is 5-oxoprolinase subunit A.